We begin with the raw amino-acid sequence, 137 residues long: Large ribosomal subunit protein uL16 (137 aa).

Belongs to the universal ribosomal protein uL16 family. In terms of assembly, part of the 50S ribosomal subunit.

Binds 23S rRNA and is also seen to make contacts with the A and possibly P site tRNAs. The protein is Large ribosomal subunit protein uL16 of Endomicrobium trichonymphae.